A 201-amino-acid chain; its full sequence is Glycerol-3-phosphate acyltransferase (201 aa).

Helical transmembrane passes span 5–25 (LLGA…FGVV), 55–75 (KMGV…ILVA), 88–108 (WVTA…WLGF), 118–138 (LGIF…GYAV), and 164–184 (TYGP…LIFL).

This sequence belongs to the PlsY family. Probably interacts with PlsX.

It is found in the cell inner membrane. The catalysed reaction is an acyl phosphate + sn-glycerol 3-phosphate = a 1-acyl-sn-glycero-3-phosphate + phosphate. It functions in the pathway lipid metabolism; phospholipid metabolism. In terms of biological role, catalyzes the transfer of an acyl group from acyl-phosphate (acyl-PO(4)) to glycerol-3-phosphate (G3P) to form lysophosphatidic acid (LPA). This enzyme utilizes acyl-phosphate as fatty acyl donor, but not acyl-CoA or acyl-ACP. This is Glycerol-3-phosphate acyltransferase from Anaeromyxobacter sp. (strain K).